Consider the following 236-residue polypeptide: MLNRNYRGLLGTKLGMTQVWDANNRVVPVTVIQAGPNVVTQVKTPDSDGYSAVQLGYGEIDPRRINKPMRGHFETSGATPRRHLVELRTADAGNYRPGQQLTGEVFDAGQVVDVTGTSKGKGFAGVMKRHGFKGLGAGHGVERKHRSPGSVGGCATPGRVFKGLRMAGRMGHDRVTVAGLTIHAVDTERGFLLIKGAIPGPDGGLVFVRSAAKRPAPEPAAPVAAAAAGTGEEASA.

The tract at residues 215–236 (PAPEPAAPVAAAAAGTGEEASA) is disordered. The segment covering 221–236 (APVAAAAAGTGEEASA) has biased composition (low complexity).

Belongs to the universal ribosomal protein uL3 family. In terms of assembly, part of the 50S ribosomal subunit. Forms a cluster with proteins L14 and L19.

Functionally, one of the primary rRNA binding proteins, it binds directly near the 3'-end of the 23S rRNA, where it nucleates assembly of the 50S subunit. In Parafrankia sp. (strain EAN1pec), this protein is Large ribosomal subunit protein uL3.